The sequence spans 224 residues: MSGLALEFCNVSKFFRDKTEQEIAILRNTNLQIHTGEIIALIGASGVGKTTTLQIAGLLNKQDSGKVKICGKEASHLDTTLRRKEIGFIYQFHHLLSELNVLKNVMLPLLISGTPKTIAEKRAKELLEFLKLEKVAYQPVDTLSGGQKQRVAVARAVIKKPALIIADEPTGNLDPNTAKDVFDLVCSFAKENGSAVFLATHDPSFLQKASRVLEIVNHSLISSI.

Residues 6–224 (LEFCNVSKFF…IVNHSLISSI (219 aa)) form the ABC transporter domain. Position 43–50 (43–50 (GASGVGKT)) interacts with ATP.

Belongs to the ABC transporter superfamily. Lipoprotein translocase (TC 3.A.1.125) family. As to quaternary structure, the complex is composed of two ATP-binding proteins (LolD) and two transmembrane proteins (LolC and LolE).

The protein resides in the cell inner membrane. Part of the ABC transporter complex LolCDE involved in the translocation of mature outer membrane-directed lipoproteins, from the inner membrane to the periplasmic chaperone, LolA. Responsible for the formation of the LolA-lipoprotein complex in an ATP-dependent manner. The chain is Lipoprotein-releasing system ATP-binding protein LolD from Neorickettsia sennetsu (strain ATCC VR-367 / Miyayama) (Ehrlichia sennetsu).